Reading from the N-terminus, the 88-residue chain is Small ribosomal subunit protein bS20 (88 aa).

Residues 1–27 (MANSKSAKKRALQSEKRRQHNASRRSM) form a disordered region.

It belongs to the bacterial ribosomal protein bS20 family.

Functionally, binds directly to 16S ribosomal RNA. In Shewanella woodyi (strain ATCC 51908 / MS32), this protein is Small ribosomal subunit protein bS20.